Reading from the N-terminus, the 622-residue chain is Glucose 1,6-bisphosphate synthase (622 aa).

Alpha-D-glucose 1,6-bisphosphate contacts are provided by Arg73 and Ser175. Ser175 serves as the catalytic Phosphoserine intermediate. Positions 175, 332, and 334 each coordinate Mg(2+). Ser175 is modified (phosphoserine). The alpha-D-glucose 1,6-bisphosphate site is built by Asp336, Arg337, Glu434, Ser436, and Lys448.

Belongs to the phosphohexose mutase family.

It localises to the cytoplasm. Its subcellular location is the cytosol. It catalyses the reaction (2R)-3-phospho-glyceroyl phosphate + alpha-D-glucose 1-phosphate = alpha-D-glucose 1,6-bisphosphate + (2R)-3-phosphoglycerate + H(+). The enzyme catalyses alpha-D-glucose 6-phosphate + (2R)-3-phospho-glyceroyl phosphate = alpha-D-glucose 1,6-bisphosphate + (2R)-3-phosphoglycerate + H(+). The catalysed reaction is (2R)-3-phospho-glyceroyl phosphate + alpha-D-ribose 1-phosphate = alpha-D-ribose 1,5-bisphosphate + (2R)-3-phosphoglycerate + H(+). It carries out the reaction 2-deoxy-alpha-D-ribose 1-phosphate + (2R)-3-phospho-glyceroyl phosphate = 2-deoxy-alpha-D-ribose 1,5-bisphosphate + (2R)-3-phosphoglycerate + H(+). It catalyses the reaction (2R)-3-phospho-glyceroyl phosphate + alpha-D-mannose 1-phosphate = alpha-D-mannose 1,6-bisphosphate + (2R)-3-phosphoglycerate + H(+). Its function is as follows. Glucose 1,6-bisphosphate synthase using 1,3-bisphosphoglycerate as a phosphate donor and a series of 1-phosphate sugars, including glucose 1-phosphate, mannose 1-phosphate, ribose 1-phosphate and deoxyribose 1-phosphate, as acceptors. In vitro, also exhibits very low phosphopentomutase and phosphoglucomutase activity which are most probably not physiologically relevant. The protein is Glucose 1,6-bisphosphate synthase of Homo sapiens (Human).